We begin with the raw amino-acid sequence, 421 residues long: 4-hydroxy-3-methylbut-2-en-1-yl diphosphate synthase (flavodoxin) (421 aa).

[4Fe-4S] cluster-binding residues include Cys-298, Cys-301, Cys-344, and Glu-351.

It belongs to the IspG family. Requires [4Fe-4S] cluster as cofactor.

The enzyme catalyses (2E)-4-hydroxy-3-methylbut-2-enyl diphosphate + oxidized [flavodoxin] + H2O + 2 H(+) = 2-C-methyl-D-erythritol 2,4-cyclic diphosphate + reduced [flavodoxin]. The protein operates within isoprenoid biosynthesis; isopentenyl diphosphate biosynthesis via DXP pathway; isopentenyl diphosphate from 1-deoxy-D-xylulose 5-phosphate: step 5/6. Its function is as follows. Converts 2C-methyl-D-erythritol 2,4-cyclodiphosphate (ME-2,4cPP) into 1-hydroxy-2-methyl-2-(E)-butenyl 4-diphosphate. This Neisseria meningitidis serogroup C / serotype 2a (strain ATCC 700532 / DSM 15464 / FAM18) protein is 4-hydroxy-3-methylbut-2-en-1-yl diphosphate synthase (flavodoxin).